We begin with the raw amino-acid sequence, 586 residues long: Homothallic switching endonuclease (586 aa).

The DOD-type homing endonuclease domain occupies 215–370 (MLGLWLGDST…IVHISRSLGM (156 aa)).

Rapidly degraded via the ubiquitin-26S proteasome system through two ubiquitin-conjugating enzymes UBC2/RAD6 and UBC3/CDC34.

The protein localises to the nucleus. Its function is as follows. Initiation of mating type interconversion. This protein is a site-specific endonuclease that cleaves a site in the mat locus on chromosome III. The double-strand break is followed by a unidirectional gene conversion event that replaces the information at the mat locus by information copied from either of the two homologous loci (HMR and HML) that reside at the extremity of the chromosome III. Endonuclease expression takes place in late G1 just before cells enter S phase. The protein is Homothallic switching endonuclease (HO) of Saccharomyces cerevisiae (strain ATCC 204508 / S288c) (Baker's yeast).